Consider the following 320-residue polypeptide: Polyisoprenyl-teichoic acid--peptidoglycan teichoic acid transferase TagU (320 aa).

Residues 1 to 15 (MVSRTERKQHKKRRK) lie on the Cytoplasmic side of the membrane. Residues 16 to 36 (WPFWLGGILLVLLLLISGGIF) traverse the membrane as a helical; Signal-anchor for type II membrane protein segment. At 37–320 (LIYNQVGAVV…SEITGHMQEQ (284 aa)) the chain is on the extracellular side.

It belongs to the LytR/CpsA/Psr (LCP) family.

Its subcellular location is the cell membrane. Its pathway is cell wall biogenesis. In terms of biological role, may catalyze the final step in cell wall teichoic acid biosynthesis, the transfer of the anionic cell wall polymers (APs) from their lipid-linked precursor to the cell wall peptidoglycan (PG). The sequence is that of Polyisoprenyl-teichoic acid--peptidoglycan teichoic acid transferase TagU from Oceanobacillus iheyensis (strain DSM 14371 / CIP 107618 / JCM 11309 / KCTC 3954 / HTE831).